A 421-amino-acid chain; its full sequence is Diaminopimelate decarboxylase (421 aa).

Lys63 bears the N6-(pyridoxal phosphate)lysine mark. Pyridoxal 5'-phosphate is bound by residues Gly242 and Glu278–Arg281. 3 residues coordinate substrate: Arg281, Arg317, and Tyr321. Cys346 serves as the catalytic Proton donor. Substrate is bound by residues Glu347 and Tyr375. Tyr375 contributes to the pyridoxal 5'-phosphate binding site.

It belongs to the Orn/Lys/Arg decarboxylase class-II family. LysA subfamily. As to quaternary structure, homodimer. It depends on pyridoxal 5'-phosphate as a cofactor.

The enzyme catalyses meso-2,6-diaminopimelate + H(+) = L-lysine + CO2. The protein operates within amino-acid biosynthesis; L-lysine biosynthesis via DAP pathway; L-lysine from DL-2,6-diaminopimelate: step 1/1. Specifically catalyzes the decarboxylation of meso-diaminopimelate (meso-DAP) to L-lysine. In Zymomonas mobilis subsp. mobilis (strain ATCC 31821 / ZM4 / CP4), this protein is Diaminopimelate decarboxylase.